We begin with the raw amino-acid sequence, 146 residues long: PAFQGVGQRLGTEIESSKDEAATAALKTVELDAVLGGRTPEEETFETRLYQFNGANSNLQERALEVLQYLKVMGDPTVTLETTPGKSAEEFLLDENRPKDVALLDDGRVVEEETMETRLYQFNGANSNLGAERSAEEMLLNENRPK.

This sequence belongs to the villin/gelsolin family. In terms of assembly, binds to actin. In terms of tissue distribution, expressed in pollen (at protein level).

The protein localises to the cytoplasm. It localises to the cytoskeleton. In terms of biological role, ca(2+)-dependent actin filament-severing protein that is required for pollen tube growth. Probably regulates the dynamics of the actin cytoskeleton. It can promote the assembly of monomers into filaments (nucleation) as well as sever filaments already formed. This chain is Villin-like protein ABP41, found in Lilium davidii (David's lily).